The sequence spans 205 residues: ATP phosphoribosyltransferase (205 aa).

Belongs to the ATP phosphoribosyltransferase family. Short subfamily.

The protein resides in the cytoplasm. The enzyme catalyses 1-(5-phospho-beta-D-ribosyl)-ATP + diphosphate = 5-phospho-alpha-D-ribose 1-diphosphate + ATP. Its pathway is amino-acid biosynthesis; L-histidine biosynthesis; L-histidine from 5-phospho-alpha-D-ribose 1-diphosphate: step 1/9. Functionally, catalyzes the condensation of ATP and 5-phosphoribose 1-diphosphate to form N'-(5'-phosphoribosyl)-ATP (PR-ATP). Has a crucial role in the pathway because the rate of histidine biosynthesis seems to be controlled primarily by regulation of HisG enzymatic activity. The protein is ATP phosphoribosyltransferase of Thermococcus gammatolerans (strain DSM 15229 / JCM 11827 / EJ3).